A 51-amino-acid chain; its full sequence is Large ribosomal subunit protein eL39 (51 aa).

This sequence belongs to the eukaryotic ribosomal protein eL39 family. As to quaternary structure, interacts with impact.

The protein is Large ribosomal subunit protein eL39 (rpl39) of Ictalurus punctatus (Channel catfish).